We begin with the raw amino-acid sequence, 669 residues long: Threonine--tRNA ligase (669 aa).

The 58-residue stretch at 3-60 (DAQQITLIVDGEETKVTEGTTGAELFFERRDVVVARVNGVLKDLDQVLTEGADVEGVT) folds into the TGS domain. Residues 260–566 (DHRKLGVELD…LTEHYAGAFP (307 aa)) form a catalytic region. Zn(2+) contacts are provided by C365, H416, and H543.

The protein belongs to the class-II aminoacyl-tRNA synthetase family. As to quaternary structure, homodimer. Zn(2+) serves as cofactor.

The protein resides in the cytoplasm. The enzyme catalyses tRNA(Thr) + L-threonine + ATP = L-threonyl-tRNA(Thr) + AMP + diphosphate + H(+). In terms of biological role, catalyzes the attachment of threonine to tRNA(Thr) in a two-step reaction: L-threonine is first activated by ATP to form Thr-AMP and then transferred to the acceptor end of tRNA(Thr). Also edits incorrectly charged L-seryl-tRNA(Thr). This chain is Threonine--tRNA ligase, found in Paenarthrobacter aurescens (strain TC1).